The primary structure comprises 528 residues: Probable GTP-binding protein OBGM, mitochondrial (528 aa).

The transit peptide at Met1–Gly45 directs the protein to the mitochondrion. An Obg domain is found at Met46–Ile339. Disordered regions lie at residues Leu52–Asp87 and His167–Gly212. The span at Pro77–Gly86 shows a compositional bias: gly residues. The span at Asn197–Asn207 shows a compositional bias: basic and acidic residues. One can recognise an OBG-type G domain in the interval Ala340 to Asp513. GTP contacts are provided by residues Gly346 to Ser353 and Asp393 to Leu397.

It belongs to the TRAFAC class OBG-HflX-like GTPase superfamily. OBG GTPase family.

The protein resides in the mitochondrion. May bind GTP and have GTPase activity. In Oryza sativa subsp. japonica (Rice), this protein is Probable GTP-binding protein OBGM, mitochondrial (OBGM).